We begin with the raw amino-acid sequence, 286 residues long: tRNA dimethylallyltransferase (286 aa).

Residues 18 to 21 (DSMQ) are interaction with substrate tRNA.

It belongs to the IPP transferase family. In terms of assembly, monomer. Mg(2+) serves as cofactor.

The catalysed reaction is adenosine(37) in tRNA + dimethylallyl diphosphate = N(6)-dimethylallyladenosine(37) in tRNA + diphosphate. Its function is as follows. Catalyzes the transfer of a dimethylallyl group onto the adenine at position 37 in tRNAs that read codons beginning with uridine, leading to the formation of N6-(dimethylallyl)adenosine (i(6)A). The protein is tRNA dimethylallyltransferase of Tropheryma whipplei (strain TW08/27) (Whipple's bacillus).